A 296-amino-acid chain; its full sequence is Cytidine deaminase (296 aa).

CMP/dCMP-type deaminase domains are found at residues 47-167 and 186-296; these read EESE…FGPS and DSSD…IDPA. 88–90 is a binding site for substrate; that stretch reads NLE. Zn(2+) is bound at residue H101. E103 serves as the catalytic Proton donor. Positions 128 and 131 each coordinate Zn(2+).

The protein belongs to the cytidine and deoxycytidylate deaminase family. As to quaternary structure, homodimer. It depends on Zn(2+) as a cofactor.

The enzyme catalyses cytidine + H2O + H(+) = uridine + NH4(+). It catalyses the reaction 2'-deoxycytidine + H2O + H(+) = 2'-deoxyuridine + NH4(+). This enzyme scavenges exogenous and endogenous cytidine and 2'-deoxycytidine for UMP synthesis. This is Cytidine deaminase from Shewanella woodyi (strain ATCC 51908 / MS32).